The sequence spans 83 residues: Mu-theraphotoxin-Hhn2e (83 aa).

The N-terminal stretch at 1–21 is a signal peptide; that stretch reads MKASMFLALAGLVLLFVVGYA. Positions 22 to 48 are excised as a propeptide; it reads SESEEKEFPRELLSKIFAVDDFKGEER. 3 disulfide bridges follow: cysteine 50–cysteine 65, cysteine 57–cysteine 70, and cysteine 64–cysteine 77. A Leucine amide modification is found at leucine 81.

The protein belongs to the neurotoxin 10 (Hwtx-1) family. 15 (Hntx-3) subfamily. Monomer. Expressed by the venom gland.

It is found in the secreted. In terms of biological role, lethal neurotoxin. Selectively blocks tetrodotoxin-sensitive voltage-gated sodium channels (Nav). Does not affect tetrodotoxin-resistant voltage-gated sodium channels or calcium channels. This is Mu-theraphotoxin-Hhn2e from Cyriopagopus hainanus (Chinese bird spider).